Consider the following 399-residue polypeptide: Elongation factor Tu 2 (399 aa).

A tr-type G domain is found at 10 to 209; it reads KPHVNIGTIG…QVDGYIPEPE (200 aa). The G1 stretch occupies residues 19–26; sequence GHVDHGKT. Residue 19 to 26 participates in GTP binding; sequence GHVDHGKT. Position 26 (T26) interacts with Mg(2+). The G2 stretch occupies residues 60-64; the sequence is GITIA. The interval 81 to 84 is G3; sequence DCPG. Residues 81-85 and 136-139 contribute to the GTP site; these read DCPGH and NKAD. A G4 region spans residues 136–139; it reads NKAD. The interval 174–176 is G5; sequence SAL.

It belongs to the TRAFAC class translation factor GTPase superfamily. Classic translation factor GTPase family. EF-Tu/EF-1A subfamily. As to quaternary structure, monomer.

It localises to the cytoplasm. The enzyme catalyses GTP + H2O = GDP + phosphate + H(+). In terms of biological role, GTP hydrolase that promotes the GTP-dependent binding of aminoacyl-tRNA to the A-site of ribosomes during protein biosynthesis. In Syntrophotalea carbinolica (strain DSM 2380 / NBRC 103641 / GraBd1) (Pelobacter carbinolicus), this protein is Elongation factor Tu 2.